The primary structure comprises 261 residues: Ribosomal RNA small subunit methyltransferase A (261 aa).

S-adenosyl-L-methionine is bound by residues Asn15, Ile17, Gly42, Glu64, Asp90, and Asn109.

This sequence belongs to the class I-like SAM-binding methyltransferase superfamily. rRNA adenine N(6)-methyltransferase family. RsmA subfamily.

The protein localises to the cytoplasm. It carries out the reaction adenosine(1518)/adenosine(1519) in 16S rRNA + 4 S-adenosyl-L-methionine = N(6)-dimethyladenosine(1518)/N(6)-dimethyladenosine(1519) in 16S rRNA + 4 S-adenosyl-L-homocysteine + 4 H(+). Its function is as follows. Specifically dimethylates two adjacent adenosines (A1518 and A1519) in the loop of a conserved hairpin near the 3'-end of 16S rRNA in the 30S particle. May play a critical role in biogenesis of 30S subunits. This is Ribosomal RNA small subunit methyltransferase A from Wolbachia sp. subsp. Brugia malayi (strain TRS).